A 158-amino-acid polypeptide reads, in one-letter code: Ribonuclease H (158 aa).

The region spanning 9-155 (AFKPVELYTD…CDKLAVAAYQ (147 aa)) is the RNase H type-1 domain. Mg(2+) contacts are provided by aspartate 18, glutamate 58, aspartate 80, and aspartate 147.

The protein belongs to the RNase H family. Monomer. Mg(2+) is required as a cofactor.

Its subcellular location is the cytoplasm. It carries out the reaction Endonucleolytic cleavage to 5'-phosphomonoester.. In terms of biological role, endonuclease that specifically degrades the RNA of RNA-DNA hybrids. The chain is Ribonuclease H from Rhodopirellula baltica (strain DSM 10527 / NCIMB 13988 / SH1).